Here is a 387-residue protein sequence, read N- to C-terminus: Exodeoxyribonuclease 7 large subunit (387 aa).

It belongs to the XseA family. As to quaternary structure, heterooligomer composed of large and small subunits.

Its subcellular location is the cytoplasm. It catalyses the reaction Exonucleolytic cleavage in either 5'- to 3'- or 3'- to 5'-direction to yield nucleoside 5'-phosphates.. Bidirectionally degrades single-stranded DNA into large acid-insoluble oligonucleotides, which are then degraded further into small acid-soluble oligonucleotides. This is Exodeoxyribonuclease 7 large subunit from Campylobacter jejuni subsp. jejuni serotype O:23/36 (strain 81-176).